The chain runs to 296 residues: SHSP domain-containing protein CPUR_05420 (296 aa).

The interval 50-83 is disordered; sequence AWQTCPQQRHPHQPDVSGPPGSGFGEQPSQDTPN. Residues 169-296 form the sHSP domain; that stretch reads ETKKSFTPDI…GKGVKEITIV (128 aa).

It belongs to the small heat shock protein (HSP20) family.

Functionally, monooxygenase; part of the ergochrome gene cluster responsible for the typical purple-black color of the ergot sclerotia. The ergochrome gene cluster produces several ergot pigments including the yellow ergochrome secalonic acid and its derivatives, as well as the red anthraquinones endocrocin and clavorubin. The pathway begins with the synthesis of atrochrysone thioester by the polyketide synthase (PKS) CPUR_05437. The atrochrysone carboxyl ACP thioesterase CPUR_05436 then breaks the thioester bond and releases the atrochrysone carboxylic acid from CPUR_05437. The atrochrysone carboxylic acid is then converted to atrochrysone which is further transformed into emodin anthrone. The next step is performed by the anthrone oxygenase CPUR_05434 that catalyzes the oxidation of emodinanthrone to emodin. Emodin is further modified to yield monodictyphenone via several steps involving CPUR_05427, CPUR_05428, CPUR_05429 and CPUR_05430. The short chain dehydrogenase/reductase CPUR_05418 then catalyzes the C-5 ketoreduction to give the xanthone skeleton of the monomeric units. Ergochromes formation requires further dimerization steps of different xanthone units, probably catalyzed by the cytochrome P450 monooxygenase CPUR_05419. CPUR_05425, CPUR_05426 and CPUR_05431 are unique to Claviceps, thus it is likely that they are involved in further modification of xanthone units or in their dimerization. The yellow ergochromes and the red anthraquinone pigments endocrocin and clavorubin are products from the same PKS derived precursors and the latter are likely shunt products in the pathway of xanthone biosynthesis. It is proposed that atrochrysone carboxylic acid released from the PKS CPUR_05437 can also be converted to endocrocin anthrone which is further oxidized into endocrocin by CPUR_05435. Endocrocin could be then modified to clavorubin, possibly by CPUR_05423 and CPUR_05431. Clavorubin is the principal anthraquinone metabolite produced by the cluster with a much higher yield compared to endocrocin. The protein is SHSP domain-containing protein CPUR_05420 of Claviceps purpurea (strain 20.1) (Ergot fungus).